Here is a 62-residue protein sequence, read N- to C-terminus: Sperm protamine P1 (62 aa).

The segment at 1 to 62 (MARYRHSRSR…RYSRRRRRRY (62 aa)) is disordered.

Belongs to the protamine P1 family. Testis.

It is found in the nucleus. It localises to the chromosome. Functionally, protamines substitute for histones in the chromatin of sperm during the haploid phase of spermatogenesis. They compact sperm DNA into a highly condensed, stable and inactive complex. The polypeptide is Sperm protamine P1 (PRM1) (Dendrolagus dorianus (Doria's tree-kangaroo)).